Reading from the N-terminus, the 189-residue chain is Myb-like protein T (189 aa).

The Myb-like domain maps to N121 to Q172.

This chain is Myb-like protein T (mybT), found in Dictyostelium discoideum (Social amoeba).